The primary structure comprises 145 residues: MSSKAARRRAREFALQGIYQWLLSANSMLLIEEHVSQVSGFDKADRELFISLLRGTLNNVDDLQAEFAPFIHRAVHELSPVERAILLLATHELKHNLDTPYRVIINEAIELAKSYGGTDGHRFVNGVLDKLATQLRVTEVSAGRS.

The protein belongs to the NusB family.

Functionally, involved in transcription antitermination. Required for transcription of ribosomal RNA (rRNA) genes. Binds specifically to the boxA antiterminator sequence of the ribosomal RNA (rrn) operons. This Aromatoleum aromaticum (strain DSM 19018 / LMG 30748 / EbN1) (Azoarcus sp. (strain EbN1)) protein is Transcription antitermination protein NusB.